The primary structure comprises 715 residues: Fatty acid oxidation complex subunit alpha (715 aa).

Positions 1–190 (MIYEGKAITV…KVGAVDAVVA (190 aa)) are enoyl-CoA hydratase/isomerase. Asp297 serves as a coordination point for substrate. The interval 312–715 (HDVKQAAVLG…MAKNGQRFFN (404 aa)) is 3-hydroxyacyl-CoA dehydrogenase. NAD(+)-binding positions include Met325, Asp344, 401-403 (VVE), Lys408, and Ser430. The For 3-hydroxyacyl-CoA dehydrogenase activity role is filled by His451. Asn454 is a binding site for NAD(+). Substrate-binding residues include Asn501 and Tyr660.

It in the N-terminal section; belongs to the enoyl-CoA hydratase/isomerase family. The protein in the C-terminal section; belongs to the 3-hydroxyacyl-CoA dehydrogenase family. As to quaternary structure, heterotetramer of two alpha chains (FadB) and two beta chains (FadA).

The enzyme catalyses a (3S)-3-hydroxyacyl-CoA + NAD(+) = a 3-oxoacyl-CoA + NADH + H(+). The catalysed reaction is a (3S)-3-hydroxyacyl-CoA = a (2E)-enoyl-CoA + H2O. It carries out the reaction a 4-saturated-(3S)-3-hydroxyacyl-CoA = a (3E)-enoyl-CoA + H2O. It catalyses the reaction (3S)-3-hydroxybutanoyl-CoA = (3R)-3-hydroxybutanoyl-CoA. The enzyme catalyses a (3Z)-enoyl-CoA = a 4-saturated (2E)-enoyl-CoA. The catalysed reaction is a (3E)-enoyl-CoA = a 4-saturated (2E)-enoyl-CoA. It participates in lipid metabolism; fatty acid beta-oxidation. Its function is as follows. Involved in the aerobic and anaerobic degradation of long-chain fatty acids via beta-oxidation cycle. Catalyzes the formation of 3-oxoacyl-CoA from enoyl-CoA via L-3-hydroxyacyl-CoA. It can also use D-3-hydroxyacyl-CoA and cis-3-enoyl-CoA as substrate. This is Fatty acid oxidation complex subunit alpha from Pseudomonas putida (strain GB-1).